The chain runs to 472 residues: Chromosomal replication initiator protein DnaA (472 aa).

Residues 1–73 (MSNMEQDRWS…LSCWQAELPE (73 aa)) form a domain I, interacts with DnaA modulators region. The interval 73–128 (EVNRVDLTVRSPVRCATPAKEVPAPVESRRDEQRPSAERSNGATPVSANHDALGGS) is domain II. Positions 90–124 (PAKEVPAPVESRRDEQRPSAERSNGATPVSANHDA) are disordered. Residues 99 to 109 (ESRRDEQRPSA) are compositionally biased toward basic and acidic residues. Polar residues predominate over residues 110–119 (ERSNGATPVS). Residues 129–351 (PLDPRLTFAS…GAINRLLAHS (223 aa)) are domain III, AAA+ region. Positions 176, 178, 179, and 180 each coordinate ATP. Residues 352-472 (KLNNQPVTLE…VESLKRQLQE (121 aa)) are domain IV, binds dsDNA.

This sequence belongs to the DnaA family. In terms of assembly, oligomerizes as a right-handed, spiral filament on DNA at oriC.

It localises to the cytoplasm. Plays an essential role in the initiation and regulation of chromosomal replication. ATP-DnaA binds to the origin of replication (oriC) to initiate formation of the DNA replication initiation complex once per cell cycle. Binds the DnaA box (a 9 base pair repeat at the origin) and separates the double-stranded (ds)DNA. Forms a right-handed helical filament on oriC DNA; dsDNA binds to the exterior of the filament while single-stranded (ss)DNA is stabiized in the filament's interior. The ATP-DnaA-oriC complex binds and stabilizes one strand of the AT-rich DNA unwinding element (DUE), permitting loading of DNA polymerase. After initiation quickly degrades to an ADP-DnaA complex that is not apt for DNA replication. Binds acidic phospholipids. This Rhodopseudomonas palustris (strain ATCC BAA-98 / CGA009) protein is Chromosomal replication initiator protein DnaA.